The chain runs to 260 residues: OCIA domain-containing protein 1 (260 aa).

The region spanning 1 to 110 (MDSPLSDGSR…MRLPNSRLGE (110 aa)) is the OCIA domain. A disordered region spans residues 146–260 (DVYTDEGLNP…KNKYGDSWQD (115 aa)). Polar residues predominate over residues 155–164 (PSRSTALNLD). Basic and acidic residues predominate over residues 205–215 (EDLRKKNREGY).

The protein belongs to the OCIAD1 family.

This is OCIA domain-containing protein 1 from Drosophila pseudoobscura pseudoobscura (Fruit fly).